A 44-amino-acid polypeptide reads, in one-letter code: Small ribosomal subunit protein eS31 (44 aa).

C18, C21, C35, and C38 together coordinate Zn(2+). The C4-type zinc-finger motif lies at 18 to 38 (CPRCGDTVLAEHEDRQHCGKC).

Belongs to the eukaryotic ribosomal protein eS31 family. As to quaternary structure, part of the 30S ribosomal subunit. Requires Zn(2+) as cofactor.

This is Small ribosomal subunit protein eS31 from Haloarcula marismortui (strain ATCC 43049 / DSM 3752 / JCM 8966 / VKM B-1809) (Halobacterium marismortui).